The chain runs to 552 residues: Hydroxylamine reductase (552 aa).

[2Fe-2S] cluster-binding residues include cysteine 5, cysteine 8, cysteine 20, and cysteine 27. Residues histidine 251, glutamate 275, cysteine 319, cysteine 407, cysteine 435, cysteine 460, glutamate 494, and lysine 496 each coordinate hybrid [4Fe-2O-2S] cluster. The residue at position 407 (cysteine 407) is a Cysteine persulfide.

It belongs to the HCP family. [2Fe-2S] cluster serves as cofactor. Hybrid [4Fe-2O-2S] cluster is required as a cofactor.

It localises to the cytoplasm. The catalysed reaction is A + NH4(+) + H2O = hydroxylamine + AH2 + H(+). In terms of biological role, catalyzes the reduction of hydroxylamine to form NH(3) and H(2)O. The sequence is that of Hydroxylamine reductase from Shigella sonnei (strain Ss046).